The primary structure comprises 65 residues: uncharacterized protein (65 aa).

This is an uncharacterized protein from Dictyostelium discoideum (Social amoeba).